An 832-amino-acid chain; its full sequence is Conserved oligomeric Golgi complex subunit 5 (832 aa).

2 stretches are compositionally biased toward pro residues: residues 1–11 (MALPPSSPSPS) and 23–38 (NPPP…PPQT). A disordered region spans residues 1-49 (MALPPSSPSPSSPSLQRLSTFKNPPPSSLSSGAPPPQTPSSSSSSPLDS). A compositionally biased stretch (low complexity) spans 39 to 49 (PSSSSSSPLDS).

The protein belongs to the COG5 family. As to quaternary structure, homodimer. Component of the conserved oligomeric Golgi complex which is composed of eight different subunits and is required for normal Golgi morphology and localization. Interacts with COG3, COG6, COG7 and COG8.

Its subcellular location is the golgi apparatus membrane. In terms of biological role, required for normal Golgi function. In Arabidopsis thaliana (Mouse-ear cress), this protein is Conserved oligomeric Golgi complex subunit 5.